Consider the following 104-residue polypeptide: Ribonuclease P protein component 4 (104 aa).

The Zn(2+) site is built by Cys-57, Cys-60, Cys-83, and Cys-86.

Belongs to the eukaryotic/archaeal RNase P protein component 4 family. Consists of a catalytic RNA component and at least 4-5 protein subunits. Zn(2+) is required as a cofactor.

Its subcellular location is the cytoplasm. It catalyses the reaction Endonucleolytic cleavage of RNA, removing 5'-extranucleotides from tRNA precursor.. Its function is as follows. Part of ribonuclease P, a protein complex that generates mature tRNA molecules by cleaving their 5'-ends. The chain is Ribonuclease P protein component 4 from Saccharolobus islandicus (strain L.S.2.15 / Lassen #1) (Sulfolobus islandicus).